A 308-amino-acid chain; its full sequence is Elongation factor Ts (308 aa).

Residues 80–83 are involved in Mg(2+) ion dislocation from EF-Tu; sequence TDFV.

It belongs to the EF-Ts family.

Its subcellular location is the cytoplasm. Its function is as follows. Associates with the EF-Tu.GDP complex and induces the exchange of GDP to GTP. It remains bound to the aminoacyl-tRNA.EF-Tu.GTP complex up to the GTP hydrolysis stage on the ribosome. In Rhodopseudomonas palustris (strain BisB18), this protein is Elongation factor Ts.